We begin with the raw amino-acid sequence, 270 residues long: Phosphonates import ATP-binding protein PhnC 1 (270 aa).

The 244-residue stretch at 2–245 (LVVEGLTCRF…IARELYDLEA (244 aa)) folds into the ABC transporter domain. An ATP-binding site is contributed by 34-41 (GRSGAGKS).

It belongs to the ABC transporter superfamily. Phosphonates importer (TC 3.A.1.9.1) family. The complex is composed of two ATP-binding proteins (PhnC), two transmembrane proteins (PhnE) and a solute-binding protein (PhnD).

The protein resides in the cell inner membrane. The catalysed reaction is phosphonate(out) + ATP + H2O = phosphonate(in) + ADP + phosphate + H(+). Its function is as follows. Part of the ABC transporter complex PhnCDE involved in phosphonates import. Responsible for energy coupling to the transport system. The sequence is that of Phosphonates import ATP-binding protein PhnC 1 from Rhodopseudomonas palustris (strain ATCC BAA-98 / CGA009).